The following is a 155-amino-acid chain: Ribosomal RNA large subunit methyltransferase H (155 aa).

Residues Leu-72, Gly-103, and 122 to 127 (LSDLTL) each bind S-adenosyl-L-methionine.

This sequence belongs to the RNA methyltransferase RlmH family. As to quaternary structure, homodimer.

The protein localises to the cytoplasm. The enzyme catalyses pseudouridine(1915) in 23S rRNA + S-adenosyl-L-methionine = N(3)-methylpseudouridine(1915) in 23S rRNA + S-adenosyl-L-homocysteine + H(+). Specifically methylates the pseudouridine at position 1915 (m3Psi1915) in 23S rRNA. The protein is Ribosomal RNA large subunit methyltransferase H of Verminephrobacter eiseniae (strain EF01-2).